A 414-amino-acid chain; its full sequence is Gamma-glutamyl phosphate reductase (414 aa).

Belongs to the gamma-glutamyl phosphate reductase family.

It localises to the cytoplasm. It catalyses the reaction L-glutamate 5-semialdehyde + phosphate + NADP(+) = L-glutamyl 5-phosphate + NADPH + H(+). The protein operates within amino-acid biosynthesis; L-proline biosynthesis; L-glutamate 5-semialdehyde from L-glutamate: step 2/2. In terms of biological role, catalyzes the NADPH-dependent reduction of L-glutamate 5-phosphate into L-glutamate 5-semialdehyde and phosphate. The product spontaneously undergoes cyclization to form 1-pyrroline-5-carboxylate. In Xanthomonas campestris pv. campestris (strain B100), this protein is Gamma-glutamyl phosphate reductase.